The following is a 288-amino-acid chain: Killer cell lectin-like receptor 2 (288 aa).

Topologically, residues 1-45 (MSEQEVTYTTLRFHKSSGLQNPVRPEETQRPRDVGHRECSVPWKF) are cytoplasmic. A helical; Signal-anchor for type II membrane protein membrane pass occupies residues 46–66 (IVIVLGILCFLLLLTVAVLVI). Over 67-288 (HIFRDGQEKH…SALQRDEDES (222 aa)) the chain is Extracellular. N-linked (GlcNAc...) asparagine glycans are attached at residues asparagine 94, asparagine 105, and asparagine 114. The C-type lectin domain maps to 144–263 (QVEGYWFCCG…THGCICEKRL (120 aa)). Cystine bridges form between cysteine 151/cysteine 156, cysteine 169/cysteine 257, cysteine 173/cysteine 259, and cysteine 238/cysteine 251. Asparagine 177 carries N-linked (GlcNAc...) asparagine glycosylation.

Homodimer; disulfide-linked.

The protein resides in the membrane. In terms of biological role, receptor on natural killer (NK) cells for class I MHC. The protein is Killer cell lectin-like receptor 2 (Klra2) of Mus musculus (Mouse).